Consider the following 136-residue polypeptide: UPF0275 protein PM0493 (136 aa).

It belongs to the UPF0275 family.

The sequence is that of UPF0275 protein PM0493 from Pasteurella multocida (strain Pm70).